The primary structure comprises 241 residues: Methylthioribulose-1-phosphate dehydratase (241 aa).

Substrate is bound at residue Cys96. Positions 114 and 116 each coordinate Zn(2+). The active-site Proton donor/acceptor is Glu138. A Zn(2+)-binding site is contributed by His194.

Belongs to the aldolase class II family. MtnB subfamily. Zn(2+) is required as a cofactor.

The protein localises to the cytoplasm. The enzyme catalyses 5-(methylsulfanyl)-D-ribulose 1-phosphate = 5-methylsulfanyl-2,3-dioxopentyl phosphate + H2O. Its pathway is amino-acid biosynthesis; L-methionine biosynthesis via salvage pathway; L-methionine from S-methyl-5-thio-alpha-D-ribose 1-phosphate: step 2/6. In terms of biological role, catalyzes the dehydration of methylthioribulose-1-phosphate (MTRu-1-P) into 2,3-diketo-5-methylthiopentyl-1-phosphate (DK-MTP-1-P). Functions in the methionine salvage pathway. May play a role in apoptosis. This is Methylthioribulose-1-phosphate dehydratase from Danio rerio (Zebrafish).